The following is a 386-amino-acid chain: Succinate--CoA ligase [ADP-forming] subunit beta (386 aa).

An ATP-grasp domain is found at 9-243 (KQLFRKYSIP…PAEDDPAEAE (235 aa)). ATP is bound by residues lysine 45, 52–54 (GRG), glutamate 98, valine 101, and glutamate 106. 2 residues coordinate Mg(2+): asparagine 198 and aspartate 212. Substrate-binding positions include asparagine 263 and 320 to 322 (GIL).

This sequence belongs to the succinate/malate CoA ligase beta subunit family. As to quaternary structure, heterotetramer of two alpha and two beta subunits. The cofactor is Mg(2+).

The catalysed reaction is succinate + ATP + CoA = succinyl-CoA + ADP + phosphate. It catalyses the reaction GTP + succinate + CoA = succinyl-CoA + GDP + phosphate. The protein operates within carbohydrate metabolism; tricarboxylic acid cycle; succinate from succinyl-CoA (ligase route): step 1/1. Succinyl-CoA synthetase functions in the citric acid cycle (TCA), coupling the hydrolysis of succinyl-CoA to the synthesis of either ATP or GTP and thus represents the only step of substrate-level phosphorylation in the TCA. The beta subunit provides nucleotide specificity of the enzyme and binds the substrate succinate, while the binding sites for coenzyme A and phosphate are found in the alpha subunit. This is Succinate--CoA ligase [ADP-forming] subunit beta from Desulfotalea psychrophila (strain LSv54 / DSM 12343).